The chain runs to 199 residues: Pathogenesis-related 5 protein Cup a 3 (199 aa).

8 disulfide bridges follow: C9–C198, C50–C60, C65–C71, C113–C187, C118–C171, C126–C136, C140–C149, and C150–C158.

The protein belongs to the thaumatin family. Expressed in pollen.

It is found in the secreted. The protein resides in the extracellular space. It localises to the extracellular matrix. The protein localises to the pollen coat. Its subcellular location is the cytoplasm. It is found in the nucleus. The protein resides in the mitochondrion. It localises to the endoplasmic reticulum. The protein localises to the golgi apparatus. Its subcellular location is the golgi stack. It is found in the vesicle. The protein resides in the vacuole. In Hesperocyparis arizonica (Arizona cypress), this protein is Pathogenesis-related 5 protein Cup a 3.